Consider the following 473-residue polypeptide: Photosystem II CP43 reaction center protein (473 aa).

The propeptide occupies 1-14 (MKTLYSLRRFYHVE). An N-acetylthreonine modification is found at threonine 15. Threonine 15 carries the phosphothreonine modification. The next 5 membrane-spanning stretches (helical) occupy residues 69–93 (LFEV…PHLA), 134–155 (LLGP…KDRN), 178–200 (KALF…RKIT), 255–275 (KPFA…LSYS), and 291–312 (WFNN…ASQA). Residue glutamate 367 participates in [CaMn4O5] cluster binding. A helical transmembrane segment spans residues 447-471 (RARAAAAGFEKGIDRDFEPVLSMTP).

The protein belongs to the PsbB/PsbC family. PsbC subfamily. In terms of assembly, PSII is composed of 1 copy each of membrane proteins PsbA, PsbB, PsbC, PsbD, PsbE, PsbF, PsbH, PsbI, PsbJ, PsbK, PsbL, PsbM, PsbT, PsbX, PsbY, PsbZ, Psb30/Ycf12, at least 3 peripheral proteins of the oxygen-evolving complex and a large number of cofactors. It forms dimeric complexes. It depends on Binds multiple chlorophylls and provides some of the ligands for the Ca-4Mn-5O cluster of the oxygen-evolving complex. It may also provide a ligand for a Cl- that is required for oxygen evolution. PSII binds additional chlorophylls, carotenoids and specific lipids. as a cofactor.

It is found in the plastid. The protein resides in the chloroplast thylakoid membrane. In terms of biological role, one of the components of the core complex of photosystem II (PSII). It binds chlorophyll and helps catalyze the primary light-induced photochemical processes of PSII. PSII is a light-driven water:plastoquinone oxidoreductase, using light energy to abstract electrons from H(2)O, generating O(2) and a proton gradient subsequently used for ATP formation. In Fagopyrum esculentum subsp. ancestrale (Wild buckwheat), this protein is Photosystem II CP43 reaction center protein.